We begin with the raw amino-acid sequence, 370 residues long: Histidinol-phosphate aminotransferase (370 aa).

At Lys222 the chain carries N6-(pyridoxal phosphate)lysine.

The protein belongs to the class-II pyridoxal-phosphate-dependent aminotransferase family. Histidinol-phosphate aminotransferase subfamily. In terms of assembly, homodimer. Pyridoxal 5'-phosphate is required as a cofactor.

The catalysed reaction is L-histidinol phosphate + 2-oxoglutarate = 3-(imidazol-4-yl)-2-oxopropyl phosphate + L-glutamate. It functions in the pathway amino-acid biosynthesis; L-histidine biosynthesis; L-histidine from 5-phospho-alpha-D-ribose 1-diphosphate: step 7/9. The protein is Histidinol-phosphate aminotransferase of Bacillus cytotoxicus (strain DSM 22905 / CIP 110041 / 391-98 / NVH 391-98).